A 341-amino-acid polypeptide reads, in one-letter code: HTH-type transcriptional repressor PurR (341 aa).

The 55-residue stretch at 2–56 (ATIKDVAKRANVSTTTVSHVINKTRFVAEETRNAVWTAIKELHYSPSAVARSLKV) folds into the HTH lacI-type domain. Positions 4–23 (IKDVAKRANVSTTTVSHVIN) form a DNA-binding region, H-T-H motif. The DNA-binding element occupies 48 to 56 (SAVARSLKV). Y73, R190, T192, F221, and D275 together coordinate hypoxanthine.

Homodimer.

Its pathway is purine metabolism; purine nucleotide biosynthesis [regulation]. In terms of biological role, is the main repressor of the genes involved in the de novo synthesis of purine nucleotides, regulating purB, purC, purEK, purF, purHD, purL, purMN and guaBA expression. PurR is allosterically activated to bind its cognate DNA by binding the purine corepressors, hypoxanthine or guanine, thereby effecting transcription repression. This is HTH-type transcriptional repressor PurR from Salmonella paratyphi A (strain ATCC 9150 / SARB42).